The chain runs to 347 residues: NADH-ubiquinone oxidoreductase chain 2 (347 aa).

A run of 11 helical transmembrane segments spans residues 1–21, 25–45, 59–79, 96–116, 127–147, 149–169, 178–198, 201–221, 240–260, 274–294, and 326–346; these read MNPAIFTTIILTMILGTMIVT, HWLTVWIGFEMNMLAIIPILM, YFLTQATASMLLMLAITINLV, ITMTLAMAMKLGLSPFHFWVP, GLILLTWQKLAPMSILYQISP, INLELLLMMAILSIAIGGWGG, IMAYSSIAHMGWMTAIMAYNP, TLLNLXVYILLTTTXFMMLML, LATTILLIMLSLGGLPPLSGF, DSIIMPTIMAMAALLNLYFYM, and ISPLIILSTLXLPLSPMLTLL.

Belongs to the complex I subunit 2 family. In terms of assembly, core subunit of respiratory chain NADH dehydrogenase (Complex I) which is composed of 45 different subunits. Interacts with TMEM242.

It is found in the mitochondrion inner membrane. It carries out the reaction a ubiquinone + NADH + 5 H(+)(in) = a ubiquinol + NAD(+) + 4 H(+)(out). Core subunit of the mitochondrial membrane respiratory chain NADH dehydrogenase (Complex I) which catalyzes electron transfer from NADH through the respiratory chain, using ubiquinone as an electron acceptor. Essential for the catalytic activity and assembly of complex I. This chain is NADH-ubiquinone oxidoreductase chain 2, found in Dobsonia minor (Lesser bare-backed fruit bat).